Reading from the N-terminus, the 94-residue chain is Integration host factor subunit beta (94 aa).

This sequence belongs to the bacterial histone-like protein family. Heterodimer of an alpha and a beta chain.

Functionally, this protein is one of the two subunits of integration host factor, a specific DNA-binding protein that functions in genetic recombination as well as in transcriptional and translational control. In Brucella melitensis biotype 2 (strain ATCC 23457), this protein is Integration host factor subunit beta.